Consider the following 20-residue polypeptide: Elongation factor Tu (20 aa).

The protein belongs to the GTP-binding elongation factor family. EF-Tu/EF-1A subfamily. In terms of assembly, monomer.

The protein localises to the cytoplasm. This protein promotes the GTP-dependent binding of aminoacyl-tRNA to the A-site of ribosomes during protein biosynthesis. This is Elongation factor Tu (tuf) from Mycoplasmopsis synoviae (Mycoplasma synoviae).